We begin with the raw amino-acid sequence, 586 residues long: Putative ABC transporter ATP-binding protein MG187 homolog (586 aa).

Residues 13 to 464 (IEFKNIVVDF…PANEFVATFL (452 aa)) form the ABC transporter domain. 45–52 (GPSGCGKT) lines the ATP pocket.

The protein belongs to the ABC transporter superfamily.

In Mycoplasma pneumoniae (strain ATCC 29342 / M129 / Subtype 1) (Mycoplasmoides pneumoniae), this protein is Putative ABC transporter ATP-binding protein MG187 homolog.